The primary structure comprises 559 residues: DNA ligase (559 aa).

Position 247 (glutamate 247) interacts with ATP. Residue lysine 249 is the N6-AMP-lysine intermediate of the active site. Residues arginine 254, arginine 269, glutamate 299, phenylalanine 339, arginine 414, and lysine 420 each coordinate ATP.

Belongs to the ATP-dependent DNA ligase family. Mg(2+) is required as a cofactor.

It carries out the reaction ATP + (deoxyribonucleotide)n-3'-hydroxyl + 5'-phospho-(deoxyribonucleotide)m = (deoxyribonucleotide)n+m + AMP + diphosphate.. It catalyses the reaction NAD(+) + (deoxyribonucleotide)n-3'-hydroxyl + 5'-phospho-(deoxyribonucleotide)m = (deoxyribonucleotide)n+m + AMP + beta-nicotinamide D-nucleotide.. Its function is as follows. DNA ligase that seals nicks in double-stranded DNA during DNA replication, DNA recombination and DNA repair. Shows high activity with either ATP or NAD(+). This Thermococcus fumicolans protein is DNA ligase.